A 300-amino-acid chain; its full sequence is tRNA dimethylallyltransferase 1 (300 aa).

13–20 (GPTGVGKT) provides a ligand contact to ATP. 15–20 (TGVGKT) contributes to the substrate binding site. Residues 38 to 41 (DSRQ) are interaction with substrate tRNA.

Belongs to the IPP transferase family. As to quaternary structure, monomer. Requires Mg(2+) as cofactor.

It carries out the reaction adenosine(37) in tRNA + dimethylallyl diphosphate = N(6)-dimethylallyladenosine(37) in tRNA + diphosphate. Its function is as follows. Catalyzes the transfer of a dimethylallyl group onto the adenine at position 37 in tRNAs that read codons beginning with uridine, leading to the formation of N6-(dimethylallyl)adenosine (i(6)A). The protein is tRNA dimethylallyltransferase 1 of Porphyromonas gingivalis (strain ATCC BAA-308 / W83).